The sequence spans 182 residues: 5-formyltetrahydrofolate cyclo-ligase (182 aa).

A disordered region spans residues Met-1–Ala-21. Positions Pro-11–Ala-21 are enriched in polar residues. Residues Gly-128 to Asp-135 and Asp-167 each bind ATP.

It belongs to the 5-formyltetrahydrofolate cyclo-ligase family.

It carries out the reaction (6S)-5-formyl-5,6,7,8-tetrahydrofolate + ATP = (6R)-5,10-methenyltetrahydrofolate + ADP + phosphate. Its pathway is one-carbon metabolism; tetrahydrofolate interconversion. Functionally, involved in the removal of 5-formyltetrahydrofolate. In vitro, it is a potent inhibitor of various folate-dependent enzymes in the C1 metabolism network and in vivo it might function as a folate storage. 5-formyltetrahydrofolate is also used as an antifolate rescue agent in cancer chemotherapy. Catalyzes the irreversible ATP-dependent transformation of 5-formyltetrahydrofolate (5-CHO-THF) to form 5,10-methenyltetrahydrofolate (5,10-CH=THF). The reverse reaction is catalyzed by the serine hydroxymethyltransferase GlyA (SHMT). This is 5-formyltetrahydrofolate cyclo-ligase (ygfA) from Escherichia coli O157:H7.